We begin with the raw amino-acid sequence, 430 residues long: Sesquiterpene synthase Agr5 (430 aa).

Residues 1-25 (MASSLLEPSLAAIALVILLASVSLS) form the signal peptide. An N-linked (GlcNAc...) asparagine glycan is attached at asparagine 113. Aspartate 176, asparagine 311, serine 315, and glutamate 319 together coordinate Mg(2+). The DDXXD motif signature appears at 176–180 (DEYTD). The (2E,6E)-farnesyl diphosphate site is built by arginine 401 and tyrosine 402.

It belongs to the terpene synthase family. Requires Mg(2+) as cofactor.

It carries out the reaction (2E,6E)-farnesyl diphosphate = viridiflorene + diphosphate. In terms of biological role, terpene cyclase that catalyzes the cyclization of farnesyl diphosphate (FPP) to viridiflorene and viridiflorol. This chain is Sesquiterpene synthase Agr5, found in Cyclocybe aegerita (Black poplar mushroom).